We begin with the raw amino-acid sequence, 347 residues long: Ribosomal RNA large subunit methyltransferase M (347 aa).

Residues Ser184, 217–220 (APGG), Asp236, Asp256, and Asp272 contribute to the S-adenosyl-L-methionine site. Lys301 acts as the Proton acceptor in catalysis.

Belongs to the class I-like SAM-binding methyltransferase superfamily. RNA methyltransferase RlmE family. RlmM subfamily. As to quaternary structure, monomer.

The protein localises to the cytoplasm. The enzyme catalyses cytidine(2498) in 23S rRNA + S-adenosyl-L-methionine = 2'-O-methylcytidine(2498) in 23S rRNA + S-adenosyl-L-homocysteine + H(+). In terms of biological role, catalyzes the 2'-O-methylation at nucleotide C2498 in 23S rRNA. The polypeptide is Ribosomal RNA large subunit methyltransferase M (Xanthomonas oryzae pv. oryzae (strain PXO99A)).